The primary structure comprises 161 residues: MDDEEVAESWEEAADSGEMERRLEEKLRISQKERLSSGSSSRSPMRTAIVIQDDSLPAAPPPQIRILKRPSSNGSLGSSALQTRPSPQVKSLAQREAEYAEARKRILGSATPDDTPQERPNSDRSPRGSSHTLSEENRPGNHVVRQPAGPDGTQGFHHQRR.

The span at Met1–Gly17 shows a compositional bias: acidic residues. The disordered stretch occupies residues Met1–Arg161. Basic and acidic residues predominate over residues Glu18 to Leu35. The 70-residue stretch at Arg42–Thr111 folds into the SUZ domain. Positions Pro70–Ser91 are enriched in polar residues. Composition is skewed to basic and acidic residues over residues Ala93–Lys104 and Pro116–Pro126. Positions Pro116–Arg160 constitute an SUZ-C domain. Residue Ser125 is modified to Phosphoserine.

This sequence belongs to the SZRD1 family.

This chain is SUZ RNA-binding domain-containing (szrd1), found in Danio rerio (Zebrafish).